A 418-amino-acid polypeptide reads, in one-letter code: MGEDAAQAEKFQHPNTDMLQEKPSSPSPMPSSTPSPSLNLGSTEEAIRDNSQVNAVTVHTLLDKLVNMLDAVRENQHNMEQRQINLEGSVKGIQNDLTKLSKYQASTSNTVSKLLEKSRKVSAHTRAVRERLERQCVQVKRLENNHAQLLRRNHFKVLIFQEESEIPASVFVKEPVPSAAEGKEELADENKSLEETLHNVDLSSDDELPRDEEALEDSAEEKMEESRAEKIKRSSLKKVDSLKKAFSRQNIEKKMNKLGTKIVSVERREKIKKSLTPNHQKASSGKSSPFKVSPLSFGRKKVREGESSVENETKLEDQMQEDREEGSFTEGLSEASLPSGLMEGSAEDAEKSARRGNNSAVGSNADLTIEEDEEEEPVALQQAQQVRYESGYMLNSEEMEEPSEKQVQPAVLHVDQTA.

The interval 1 to 42 is disordered; sequence MGEDAAQAEKFQHPNTDMLQEKPSSPSPMPSSTPSPSLNLGS. N-acetylglycine is present on Gly2. An interaction with CAVIN1 region spans residues 2-168; that stretch reads GEDAAQAEKF…IFQEESEIPA (167 aa). 4 positions are modified to phosphoserine: Ser27, Ser35, Ser37, and Ser51. Coiled-coil stretches lie at residues 61 to 87 and 126 to 268; these read LLDK…INLE and RAVR…VERR. The tract at residues 62-100 is leucine-zipper; it reads LDKLVNMLDAVRENQHNMEQRQINLEGSVKGIQNDLTKL. Thr196 carries the phosphothreonine modification. Disordered stretches follow at residues 200–238 and 262–382; these read VDLS…SLKK and IVSV…ALQQ. Ser203, Ser204, and Ser218 each carry phosphoserine. Over residues 203–219 the composition is skewed to acidic residues; it reads SSDDELPRDEEALEDSA. Residues 220–238 show a composition bias toward basic and acidic residues; the sequence is EEKMEESRAEKIKRSSLKK. Positions 275-287 are enriched in polar residues; the sequence is LTPNHQKASSGKS. Residues Ser283, Ser284, Ser287, Ser288, Ser293, and Ser296 each carry the phosphoserine modification. The span at 303–321 shows a compositional bias: basic and acidic residues; sequence REGESSVENETKLEDQMQE. Phosphoserine occurs at positions 327, 336, 359, and 363. Over residues 355 to 366 the composition is skewed to polar residues; sequence RGNNSAVGSNAD. Thr368 carries the phosphothreonine modification. The span at 368-377 shows a compositional bias: acidic residues; sequence TIEEDEEEEP. Tyr388 is modified (phosphotyrosine). Ser390 and Ser396 each carry phosphoserine. The interval 396-418 is disordered; sequence SEEMEEPSEKQVQPAVLHVDQTA.

This sequence belongs to the CAVIN family. In terms of assembly, component of the CAVIN complex composed of CAVIN1, CAVIN2, CAVIN3 and CAVIN4. Binds to PRKCA in the presence of phosphatidylserine. Interacts with CAVIN4; this augments the transactivation of NPPA by CAVIN4. Interacts with CAVIN1. Interacts with CAV3. In terms of processing, the N-terminus is blocked. As to expression, heart, adipose tissue, lung and endothelial cells (at protein level). Highly expressed in kidney and expressed at lower levels in liver, spleen, thymus, stomach, intestine and uterus.

Its subcellular location is the cytoplasm. The protein resides in the cytosol. It is found in the membrane. The protein localises to the caveola. Functionally, plays an important role in caveolar biogenesis and morphology. Regulates caveolae morphology by inducing membrane curvature within caveolae. Plays a role in caveola formation in a tissue-specific manner. Required for the formation of caveolae in the lung and fat endothelia but not in the heart endothelia. Negatively regulates the size or stability of CAVIN complexes in the lung endothelial cells. May play a role in targeting PRKCA to caveolae. The chain is Caveolae-associated protein 2 (Cavin2) from Mus musculus (Mouse).